Consider the following 111-residue polypeptide: UPF0122 protein YofM (111 aa).

The protein belongs to the UPF0122 family.

Might take part in the signal recognition particle (SRP) pathway. This is inferred from the conservation of its genetic proximity to ftsY/ffh. May be a regulatory protein. The sequence is that of UPF0122 protein YofM (yofM) from Lactococcus lactis subsp. lactis (strain IL1403) (Streptococcus lactis).